Consider the following 1014-residue polypeptide: Latrophilin-like protein 1 (1014 aa).

Residues 1-27 (MRRNKTTYSLLQTILVACLLTVTPTFA) form the signal peptide. Asparagine 4 carries N-linked (GlcNAc...) asparagine glycosylation. The Extracellular segment spans residues 28–555 (SNKPTTDESG…IDQTLLTLLT (528 aa)). The SUEL-type lectin domain maps to 43-134 (ICDGEAAELS…KYLEVKYNCV (92 aa)). A GAIN-B domain is found at 359–542 (ESNVIVQPAI…AVLMDVRGHD (184 aa)). 2 N-linked (GlcNAc...) asparagine glycosylation sites follow: asparagine 473 and asparagine 518. 2 disulfides stabilise this stretch: cysteine 497–cysteine 524 and cysteine 512–cysteine 526. The interval 497–542 (CVWWNHHELKWKPSGCKLSYHNKTMTSCDCTHLTHFAVLMDVRGHD) is GPS. Residues 556-576 (YVGCIISIICLLLTFFAYLIF) traverse the membrane as a helical segment. At 577–584 (SRNGGDRV) the chain is on the cytoplasmic side. Residues 585 to 605 (FIHENLCLSLAIAEITFLAGI) form a helical membrane-spanning segment. Residues 606–613 (TRTEDSLQ) are Extracellular-facing. Residues 614 to 634 (CGIIAVALMYMFLSALTWMLL) traverse the membrane as a helical segment. Residues 635–653 (EGYHIHRMLTEVFPSDPRR) lie on the Cytoplasmic side of the membrane. A helical membrane pass occupies residues 654-674 (FTYLLVGYIPPAIITLVAYLY). Residues 675 to 692 (NSDGFGTPDHCWLSTQNN) lie on the Extracellular side of the membrane. The helical transmembrane segment at 693–713 (FIWFFAGPACFIFCANSLVLV) threads the bilayer. The Cytoplasmic segment spans residues 714 to 745 (KTLCTVYQHTSGGYLPCRHDVDSGRSIRNWVK). Residues 746–766 (GSLALASLLGVTWIFGLFWVE) traverse the membrane as a helical segment. Residues 767–770 (DSRS) lie on the Extracellular side of the membrane. Residues 771–791 (IVMAYVFTISNSLQGLFIFLF) form a helical membrane-spanning segment. Residues 792 to 1014 (HVVFAEKMRK…NKPSMYCQDL (223 aa)) lie on the Cytoplasmic side of the membrane. Disordered stretches follow at residues 814–833 (GSSN…DLMS) and 932–994 (YQGW…EVTP). The segment covering 941 to 952 (PEFSPPPPPLST) has biased composition (pro residues). Over residues 965–986 (SGRRPPSSKMSDDSAYSDGSSS) the composition is skewed to low complexity.

This sequence belongs to the G-protein coupled receptor 2 family. LN-TM7 subfamily. Monomer and homodimer. Post-translationally, autoproteolytically processed at the GPS region of the GAIN-B domain; this cleavage modulates receptor activity. Expressed in epidermal precursor cells and pharyngeal primordium. In adults expression is seen in pharyngeal muscle cells and nervous system, the nerve ring, the gonad, and the vulva.

It localises to the cell membrane. Functionally, has a role in the establishment of anterior-posterior polarity in tissues during embryogenesis. Required for the alignment of the mitotic spindles and division planes. May have a role in cell death events. Required for normal defection and oocyte fertilization. Involved in sperm function. Operates in pharyngeal pumping during feeding. This Caenorhabditis elegans protein is Latrophilin-like protein 1.